Consider the following 535-residue polypeptide: Bifunctional purine biosynthesis protein PurH (535 aa).

Residues 6 to 151 (TRLPIRRALI…KNHKDVAIVV (146 aa)) enclose the MGS-like domain.

The protein belongs to the PurH family.

The enzyme catalyses (6R)-10-formyltetrahydrofolate + 5-amino-1-(5-phospho-beta-D-ribosyl)imidazole-4-carboxamide = 5-formamido-1-(5-phospho-D-ribosyl)imidazole-4-carboxamide + (6S)-5,6,7,8-tetrahydrofolate. It catalyses the reaction IMP + H2O = 5-formamido-1-(5-phospho-D-ribosyl)imidazole-4-carboxamide. It functions in the pathway purine metabolism; IMP biosynthesis via de novo pathway; 5-formamido-1-(5-phospho-D-ribosyl)imidazole-4-carboxamide from 5-amino-1-(5-phospho-D-ribosyl)imidazole-4-carboxamide (10-formyl THF route): step 1/1. Its pathway is purine metabolism; IMP biosynthesis via de novo pathway; IMP from 5-formamido-1-(5-phospho-D-ribosyl)imidazole-4-carboxamide: step 1/1. The chain is Bifunctional purine biosynthesis protein PurH from Pseudomonas fluorescens (strain ATCC BAA-477 / NRRL B-23932 / Pf-5).